The sequence spans 427 residues: MLDIKWIRENPETLDKALAKRGAAPLSSELIALDEKRREHVGKVQAAQERRNAASKEIGKAMAAKDMGTAEKLKAEVGELKDFLAHAEEDERRLSKELSDALSTIPNIPLDDVPLGKDESDNVELRRIGNPHNFSFQPKEHFELGEALGYMDFERAAKLAGARFTVLKGPLARLERALGQFMLDLHTTEHGYTEVMPPLMVRDEAVYGTGQLPKFSEDLFRTTDGRWLIPTAEVPLTNLVAEEIVDMKGLPLRFTALTPCFRSEAGSAGRDTRGMLRQHQFLKVEMVSITDAESSVAEHERMTACAEEVLKRLGLPFRTVVLCTGDMGFGAQRTYDIEVWLPGQNTYREISSCSTCGDFQGRRMNARYRPEGEKSTRFVHTLNGSGVAVGRALIAVMENYQQEDGSIHIPEALQPYIGGLTRIEKAA.

231–233 (TAE) serves as a coordination point for L-serine. Residue 262 to 264 (RSE) participates in ATP binding. Glu285 is a binding site for L-serine. 349-352 (EISS) contacts ATP. Residue Ser385 coordinates L-serine.

This sequence belongs to the class-II aminoacyl-tRNA synthetase family. Type-1 seryl-tRNA synthetase subfamily. As to quaternary structure, homodimer. The tRNA molecule binds across the dimer.

It localises to the cytoplasm. It carries out the reaction tRNA(Ser) + L-serine + ATP = L-seryl-tRNA(Ser) + AMP + diphosphate + H(+). The catalysed reaction is tRNA(Sec) + L-serine + ATP = L-seryl-tRNA(Sec) + AMP + diphosphate + H(+). The protein operates within aminoacyl-tRNA biosynthesis; selenocysteinyl-tRNA(Sec) biosynthesis; L-seryl-tRNA(Sec) from L-serine and tRNA(Sec): step 1/1. Its function is as follows. Catalyzes the attachment of serine to tRNA(Ser). Is also able to aminoacylate tRNA(Sec) with serine, to form the misacylated tRNA L-seryl-tRNA(Sec), which will be further converted into selenocysteinyl-tRNA(Sec). This is Serine--tRNA ligase from Brucella canis (strain ATCC 23365 / NCTC 10854 / RM-666).